A 709-amino-acid polypeptide reads, in one-letter code: UvrABC system protein B (709 aa).

The region spanning 35–416 (ERVEAGEKDV…YELGQADGYV (382 aa)) is the Helicase ATP-binding domain. 48 to 55 (GATGTGKS) provides a ligand contact to ATP. The Beta-hairpin motif lies at 101–124 (YYDYYQPEAYVPQTDTFIEKDSSI). The Helicase C-terminal domain occupies 438-604 (QIDDLLEQIR…PLRKRIADIT (167 aa)). The 36-residue stretch at 666 to 701 (ADLIEQMSQQMHQAAADLQFELAARLRDEVGELKKE) folds into the UVR domain.

Belongs to the UvrB family. In terms of assembly, forms a heterotetramer with UvrA during the search for lesions. Interacts with UvrC in an incision complex.

It localises to the cytoplasm. Functionally, the UvrABC repair system catalyzes the recognition and processing of DNA lesions. A damage recognition complex composed of 2 UvrA and 2 UvrB subunits scans DNA for abnormalities. Upon binding of the UvrA(2)B(2) complex to a putative damaged site, the DNA wraps around one UvrB monomer. DNA wrap is dependent on ATP binding by UvrB and probably causes local melting of the DNA helix, facilitating insertion of UvrB beta-hairpin between the DNA strands. Then UvrB probes one DNA strand for the presence of a lesion. If a lesion is found the UvrA subunits dissociate and the UvrB-DNA preincision complex is formed. This complex is subsequently bound by UvrC and the second UvrB is released. If no lesion is found, the DNA wraps around the other UvrB subunit that will check the other stand for damage. This chain is UvrABC system protein B, found in Micrococcus luteus (strain ATCC 4698 / DSM 20030 / JCM 1464 / CCM 169 / CCUG 5858 / IAM 1056 / NBRC 3333 / NCIMB 9278 / NCTC 2665 / VKM Ac-2230) (Micrococcus lysodeikticus).